The chain runs to 282 residues: Homeobox protein vex1 (282 aa).

The homeobox DNA-binding region spans 129-188; it reads ASRARTKFTAEQLEELEKSFKENRYIGSSEKRRLSKVLKLSENQIKTWFQNRRMKFKRQT.

The protein resides in the nucleus. Its function is as follows. Transcriptional repressor. Acts in a ventral signaling pathway downstream of bmp4 to antagonize the Spemann organizer and ventrally pattern the embryonic mesoderm. Represses transcription of the dorsal genes gsc and otx2. The sequence is that of Homeobox protein vex1 from Xenopus tropicalis (Western clawed frog).